The following is a 600-amino-acid chain: Integrator complex subunit 11 (600 aa).

H68, H70, D72, H73, H157, and D178 together coordinate Zn(2+). The short motif at 68 to 73 is the HXHXDH motif element; sequence HFHLDH. E203 is a catalytic residue. Residue K381 forms a Glycyl lysine isopeptide (Lys-Gly) (interchain with G-Cter in SUMO) linkage. H414 provides a ligand contact to Zn(2+). Glycyl lysine isopeptide (Lys-Gly) (interchain with G-Cter in SUMO) cross-links involve residues K462 and K475. The short motif at 469-479 is the Nuclear localization signal element; that stretch reads LLPEAKKPRLL.

This sequence belongs to the metallo-beta-lactamase superfamily. RNA-metabolizing metallo-beta-lactamase-like family. INTS11 subfamily. Component of the Integrator complex, composed of core subunits INTS1, INTS2, INTS3, INTS4, INTS5, INTS6, INTS7, INTS8, INTS9/RC74, INTS10, INTS11/CPSF3L, INTS12, INTS13, INTS14 and INTS15. The core complex associates with protein phosphatase 2A subunits PPP2CA and PPP2R1A, to form the Integrator-PP2A (INTAC) complex. INTS11 is part of the RNA endonuclease subcomplex, composed of INTS4, INTS9, INTS11 and inositol hexakisphosphate (InsP6). Interacts with WDR73; interaction is required for the assembly of the RNA endonuclease subcomplex in the cytoplasm. Interacts with BRAT1; interaction is required for the assembly of the RNA endonuclease subcomplex and inhibits the endonuclease activity of INTS11 before formation of mature integrator complex. Requires Zn(2+) as cofactor. In terms of processing, sumoylated; sumoylation regulates its subcellular location and is required for integrator complex integrity.

The protein localises to the nucleus. Its subcellular location is the cytoplasm. Its activity is regulated as follows. The RNA endonuclease activity is inhibited by BRAT1 that forms hyrogen bond and hydrophobic interactions with the active site. In terms of biological role, RNA endonuclease component of the integrator complex, a multiprotein complex that terminates RNA polymerase II (Pol II) transcription in the promoter-proximal region of genes. The integrator complex provides a quality checkpoint during transcription elongation by driving premature transcription termination of transcripts that are unfavorably configured for transcriptional elongation: the complex terminates transcription by (1) catalyzing dephosphorylation of the C-terminal domain (CTD) of Pol II subunit POLR2A/RPB1 and SUPT5H/SPT5, (2) degrading the exiting nascent RNA transcript via endonuclease activity and (3) promoting the release of Pol II from bound DNA. The integrator complex is also involved in terminating the synthesis of non-coding Pol II transcripts, such as enhancer RNAs (eRNAs), small nuclear RNAs (snRNAs), telomerase RNAs and long non-coding RNAs (lncRNAs). Within the integrator complex, INTS11 constitutes the RNA endonuclease subunit that degrades exiting nascent RNA transcripts. Mediates recruitment of cytoplasmic dynein to the nuclear envelope, probably as component of the integrator complex. The protein is Integrator complex subunit 11 (INTS11) of Pongo abelii (Sumatran orangutan).